Here is a 163-residue protein sequence, read N- to C-terminus: Nucleotide-binding protein BcerKBAB4_1061 (163 aa).

The protein belongs to the YajQ family.

Its function is as follows. Nucleotide-binding protein. This chain is Nucleotide-binding protein BcerKBAB4_1061, found in Bacillus mycoides (strain KBAB4) (Bacillus weihenstephanensis).